A 583-amino-acid polypeptide reads, in one-letter code: Laccase-21 (583 aa).

The signal sequence occupies residues 1–29 (MGIAKIPAVLWLLACAVLTFAVAISPAHG). 2 Plastocyanin-like domains span residues 39–155 (FITE…PKHG) and 165–323 (KEIP…YYTG). N85 is a glycosylation site (N-linked (GlcNAc...) asparagine). 4 residues coordinate Cu cation: H89, H91, H134, and H136. 7 N-linked (GlcNAc...) asparagine glycosylation sites follow: N282, N311, N384, N387, N399, N409, and N446. In terms of domain architecture, Plastocyanin-like 3 spans 436 to 567 (FPNNPAPVFV…NTVFIVKDGK (132 aa)). The Cu cation site is built by H484, H487, H489, H546, C547, H548, H552, and M557.

Belongs to the multicopper oxidase family. It depends on Cu cation as a cofactor.

The protein resides in the secreted. Its subcellular location is the extracellular space. It localises to the apoplast. It catalyses the reaction 4 hydroquinone + O2 = 4 benzosemiquinone + 2 H2O. Functionally, lignin degradation and detoxification of lignin-derived products. This chain is Laccase-21 (LAC21), found in Oryza sativa subsp. japonica (Rice).